The sequence spans 226 residues: Chalcone--flavanone isomerase (226 aa).

Substrate is bound by residues T51, N116, and S194.

The protein belongs to the chalcone isomerase family.

It carries out the reaction a chalcone = a flavanone.. It participates in secondary metabolite biosynthesis; flavonoid biosynthesis. Its function is as follows. Catalyzes the intramolecular cyclization of bicyclic chalcones into tricyclic (S)-flavanones. Responsible for the isomerization of 4,2',4',6'-tetrahydroxychalcone (also termed chalcone) into naringenin. In Canna generalis (Canna lily), this protein is Chalcone--flavanone isomerase (CHI).